Consider the following 109-residue polypeptide: Thioredoxin-like protein slr1139 (109 aa).

Positions 2–107 constitute a Thioredoxin domain; that stretch reads SLLEITDAEF…LLELLKEELD (106 aa). The cysteines at positions 31 and 34 are disulfide-linked.

Belongs to the thioredoxin family.

The polypeptide is Thioredoxin-like protein slr1139 (Synechocystis sp. (strain ATCC 27184 / PCC 6803 / Kazusa)).